The primary structure comprises 469 residues: Pentatricopeptide repeat-containing protein At2g34370, mitochondrial (469 aa).

Residues 1-65 (MVRLVCSRIL…QNRSFVQCRR (65 aa)) constitute a mitochondrion transit peptide. 4 PPR repeats span residues 142 to 172 (DARSYHTVIEMYSGCRSTDDALNVFNEMPKR), 173 to 207 (NSETWGTMIRCLAKNGEGERAIDMFTRFIEEGNKP), 208 to 238 (DKEIFKAVFFACVSIGDINEGLLHFESMYRD), and 244 to 274 (SMEDYVNVIEMLAACGHLDEALDFVERMTVE). The interval 375–469 (DIGFVPATRV…NGVCSCKDYW (95 aa)) is type DYW motif.

Belongs to the PPR family. PCMP-H subfamily.

Its subcellular location is the mitochondrion. This Arabidopsis thaliana (Mouse-ear cress) protein is Pentatricopeptide repeat-containing protein At2g34370, mitochondrial (PCMP-H25).